The sequence spans 527 residues: MEPNSYGSGKAAVGDGVGAPMLQTAPAPAPIPSANAPPPFLVKTYDMVDDPSTDKIVSWSPTNNSFVVWDPPEFAKDLLPKYFKHNNFSSFVRQLNTYGFRKVDPDRWEFANEGFLRGQKHLLKSISRRKPAHGHAQQQQQPHGNAQQQMQPPGHSASVGACVEVGKFGLEEEVERLKRDKNVLMQELVRLRQQQQATDNQLQGMVQRLQGMELRQQQMMSFLAKAVNRPGFLAQFVQQQNESNKRIAEGSKKRRIKQDIESQDPSVTPADGQIVKYQPGINEAAKAMLRELSKLDSSPRLDNFSNSPESFLIGDGSPQSNASSGRVSGVTLQEVPPTSGKPLLNTASAIAGQSLLPATSEMQSSHLGTCSEIINNQLSNIIPLVGGEDLHPGSLSASDMIMPELSQLQGILPENNTDVIGCDSFMDTSAVEGKVGLDIIGSCLSPGADIDWQSGLLDEIEEFPSVGDPFWEKFLQSPCSPDAAMDDDISNTSETKPQINGWDKTQNMEHLTEQMGATNIKQQKHMI.

The DNA-binding element occupies Pro39–His133. Disordered stretches follow at residues Arg128–Ser158, Asn241–Gln273, and Ser297–Lys341. Over residues Gly134 to Pro152 the composition is skewed to low complexity. Residues Ser317 to Arg326 show a composition bias toward polar residues.

Belongs to the HSF family. In terms of assembly, homotrimer. Exhibits temperature-dependent phosphorylation.

It localises to the nucleus. DNA-binding protein that specifically binds heat shock promoter elements (HSE) and activates transcription. This is Heat shock factor protein HSF8 (HSF8) from Solanum lycopersicum (Tomato).